The following is a 126-amino-acid chain: Large ribosomal subunit protein bL12 (126 aa).

Residues 104–116 show a composition bias toward basic and acidic residues; the sequence is AKKEDAEKAKAQL. A disordered region spans residues 104-126; sequence AKKEDAEKAKAQLEEAGATVELK. The span at 117–126 shows a compositional bias: low complexity; it reads EEAGATVELK.

It belongs to the bacterial ribosomal protein bL12 family. In terms of assembly, homodimer. Part of the ribosomal stalk of the 50S ribosomal subunit. Forms a multimeric L10(L12)X complex, where L10 forms an elongated spine to which 2 to 4 L12 dimers bind in a sequential fashion. Binds GTP-bound translation factors.

Forms part of the ribosomal stalk which helps the ribosome interact with GTP-bound translation factors. Is thus essential for accurate translation. The protein is Large ribosomal subunit protein bL12 of Bifidobacterium animalis subsp. lactis (strain AD011).